A 480-amino-acid polypeptide reads, in one-letter code: RNA-splicing ligase RtcB homolog (480 aa).

5 residues coordinate Mn(2+): aspartate 93, cysteine 96, histidine 202, histidine 234, and histidine 328. 201 to 205 (NHYTE) serves as a coordination point for GMP. GMP-binding positions include 328–329 (HN), 377–380 (GGTM), serine 384, 403–406 (HGAG), and lysine 479. The active-site GMP-histidine intermediate is histidine 403.

Belongs to the RtcB family. Catalytic component of the tRNA-splicing ligase complex. Mn(2+) is required as a cofactor.

The enzyme catalyses a 3'-end 3'-phospho-ribonucleotide-RNA + a 5'-end dephospho-ribonucleoside-RNA + GTP = a ribonucleotidyl-ribonucleotide-RNA + GMP + diphosphate. It carries out the reaction a 3'-end 2',3'-cyclophospho-ribonucleotide-RNA + a 5'-end dephospho-ribonucleoside-RNA + GTP + H2O = a ribonucleotidyl-ribonucleotide-RNA + GMP + diphosphate + H(+). Catalytic subunit of the tRNA-splicing ligase complex that acts by directly joining spliced tRNA halves to mature-sized tRNAs by incorporating the precursor-derived splice junction phosphate into the mature tRNA as a canonical 3',5'-phosphodiester. May act as an RNA ligase with broad substrate specificity, and may function toward other RNAs. In Thalassiosira pseudonana (Marine diatom), this protein is RNA-splicing ligase RtcB homolog.